Here is a 126-residue protein sequence, read N- to C-terminus: MLMHFIPRRSSKAVQFNWLEIGVWRGGVYVKKGIVNARTNNSNFYKMPVVFGIVKGMGALCVHAWGMGYGGIIDCSPVTEHGNISVLQLEYMPWICLSKIMSCSVASRHSNVWIMDETIAPLVGCL.

This is an uncharacterized protein from Saccharomyces cerevisiae (strain ATCC 204508 / S288c) (Baker's yeast).